The following is a 512-amino-acid chain: ATP synthase subunit alpha (512 aa).

169–176 (GDRQTGKT) is an ATP binding site.

The protein belongs to the ATPase alpha/beta chains family. As to quaternary structure, F-type ATPases have 2 components, CF(1) - the catalytic core - and CF(0) - the membrane proton channel. CF(1) has five subunits: alpha(3), beta(3), gamma(1), delta(1), epsilon(1). CF(0) has four main subunits: a(1), b(1), b'(1) and c(9-12).

It is found in the cell inner membrane. It carries out the reaction ATP + H2O + 4 H(+)(in) = ADP + phosphate + 5 H(+)(out). Functionally, produces ATP from ADP in the presence of a proton gradient across the membrane. The alpha chain is a regulatory subunit. In Jannaschia sp. (strain CCS1), this protein is ATP synthase subunit alpha.